The chain runs to 644 residues: NADH-ubiquinone oxidoreductase chain 5 (644 aa).

The next 18 membrane-spanning stretches (helical) occupy residues 4 to 23 (FITL…RYIG), 30 to 49 (LNII…YINI), 78 to 100 (DLLS…IFAW), 112 to 129 (FYTY…LVLG), 133 to 155 (LILF…FWYN), 167 to 189 (LFIN…YIYK), 199 to 221 (LVSY…AASA), 234 to 256 (WAMA…IAGI), 271 to 293 (NILL…IAIN), 300 to 322 (IIAL…SSYN), 327 to 349 (HVLC…IHSL), 361 to 383 (GLLI…LMGL), 398 to 420 (SSIG…SSLL), 466 to 488 (SWMA…YLLQ), 517 to 539 (INIY…IIYL), 546 to 568 (LLYI…RFLF), 594 to 616 (GFLY…FNII), and 623 to 642 (FNHY…YLQF).

Belongs to the complex I subunit 5 family.

Its subcellular location is the mitochondrion inner membrane. It catalyses the reaction a ubiquinone + NADH + 5 H(+)(in) = a ubiquinol + NAD(+) + 4 H(+)(out). In terms of biological role, core subunit of the mitochondrial membrane respiratory chain NADH dehydrogenase (Complex I) that is believed to belong to the minimal assembly required for catalysis. Complex I functions in the transfer of electrons from NADH to the respiratory chain. The immediate electron acceptor for the enzyme is believed to be ubiquinone. In Wickerhamomyces canadensis (Yeast), this protein is NADH-ubiquinone oxidoreductase chain 5 (ND5).